We begin with the raw amino-acid sequence, 382 residues long: Pyrimidine monooxygenase RutA (382 aa).

Residues 68 to 69, Asn-134, Glu-143, 159 to 160, and Ser-209 contribute to the FMN site; these read IK and RY.

It belongs to the NtaA/SnaA/DszA monooxygenase family. RutA subfamily.

The catalysed reaction is uracil + FMNH2 + NADH + O2 = (Z)-3-ureidoacrylate + FMN + NAD(+) + H2O + H(+). The enzyme catalyses thymine + FMNH2 + NADH + O2 = (Z)-2-methylureidoacrylate + FMN + NAD(+) + H2O + H(+). Catalyzes the pyrimidine ring opening between N-3 and C-4 by an unusual flavin hydroperoxide-catalyzed mechanism, adding oxygen atoms in the process to yield ureidoacrylate peracid, that immediately reacts with FMN forming ureidoacrylate and FMN-N(5)-oxide. The FMN-N(5)-oxide reacts spontaneously with NADH to produce FMN. Requires the flavin reductase RutF to regenerate FMN in vivo. This Escherichia coli O45:K1 (strain S88 / ExPEC) protein is Pyrimidine monooxygenase RutA.